The sequence spans 271 residues: Ribosomal RNA small subunit methyltransferase A (271 aa).

Positions 18, 20, 45, 66, 91, and 112 each coordinate S-adenosyl-L-methionine.

It belongs to the class I-like SAM-binding methyltransferase superfamily. rRNA adenine N(6)-methyltransferase family. RsmA subfamily.

It is found in the cytoplasm. The enzyme catalyses adenosine(1518)/adenosine(1519) in 16S rRNA + 4 S-adenosyl-L-methionine = N(6)-dimethyladenosine(1518)/N(6)-dimethyladenosine(1519) in 16S rRNA + 4 S-adenosyl-L-homocysteine + 4 H(+). In terms of biological role, specifically dimethylates two adjacent adenosines (A1518 and A1519) in the loop of a conserved hairpin near the 3'-end of 16S rRNA in the 30S particle. May play a critical role in biogenesis of 30S subunits. The polypeptide is Ribosomal RNA small subunit methyltransferase A (Vibrio atlanticus (strain LGP32) (Vibrio splendidus (strain Mel32))).